We begin with the raw amino-acid sequence, 464 residues long: Argininosuccinate lyase (464 aa).

Belongs to the lyase 1 family. Argininosuccinate lyase subfamily.

Its subcellular location is the cytoplasm. It catalyses the reaction 2-(N(omega)-L-arginino)succinate = fumarate + L-arginine. The protein operates within amino-acid biosynthesis; L-arginine biosynthesis; L-arginine from L-ornithine and carbamoyl phosphate: step 3/3. The chain is Argininosuccinate lyase from Pseudomonas fluorescens (strain ATCC BAA-477 / NRRL B-23932 / Pf-5).